Reading from the N-terminus, the 495-residue chain is ATP synthase subunit beta, chloroplastic (495 aa).

Gly-172–Thr-179 contacts ATP.

It belongs to the ATPase alpha/beta chains family. In terms of assembly, F-type ATPases have 2 components, CF(1) - the catalytic core - and CF(0) - the membrane proton channel. CF(1) has five subunits: alpha(3), beta(3), gamma(1), delta(1), epsilon(1). CF(0) has four main subunits: a(1), b(1), b'(1) and c(9-12).

It localises to the plastid. It is found in the chloroplast thylakoid membrane. It carries out the reaction ATP + H2O + 4 H(+)(in) = ADP + phosphate + 5 H(+)(out). In terms of biological role, produces ATP from ADP in the presence of a proton gradient across the membrane. The catalytic sites are hosted primarily by the beta subunits. This is ATP synthase subunit beta, chloroplastic from Pseudogaltonia clavata (Cape hyacinth).